The chain runs to 200 residues: uncharacterized protein (200 aa).

Residues 1–21 (MSNSAQRDARNSRDESARASD) form a disordered region. Over residues 7 to 21 (RDARNSRDESARASD) the composition is skewed to basic and acidic residues.

This is an uncharacterized protein from Mycobacterium tuberculosis (strain CDC 1551 / Oshkosh).